The primary structure comprises 415 residues: Serine hydroxymethyltransferase (415 aa).

(6S)-5,6,7,8-tetrahydrofolate-binding positions include L119 and 123 to 125; that span reads GHL. K228 is modified (N6-(pyridoxal phosphate)lysine).

This sequence belongs to the SHMT family. Homodimer. Pyridoxal 5'-phosphate serves as cofactor.

The protein localises to the cytoplasm. The catalysed reaction is (6R)-5,10-methylene-5,6,7,8-tetrahydrofolate + glycine + H2O = (6S)-5,6,7,8-tetrahydrofolate + L-serine. Its pathway is one-carbon metabolism; tetrahydrofolate interconversion. It functions in the pathway amino-acid biosynthesis; glycine biosynthesis; glycine from L-serine: step 1/1. Its function is as follows. Catalyzes the reversible interconversion of serine and glycine with tetrahydrofolate (THF) serving as the one-carbon carrier. This reaction serves as the major source of one-carbon groups required for the biosynthesis of purines, thymidylate, methionine, and other important biomolecules. Also exhibits THF-independent aldolase activity toward beta-hydroxyamino acids, producing glycine and aldehydes, via a retro-aldol mechanism. The sequence is that of Serine hydroxymethyltransferase from Coprothermobacter proteolyticus (strain ATCC 35245 / DSM 5265 / OCM 4 / BT).